A 218-amino-acid chain; its full sequence is Protease PrsW (218 aa).

The chain crosses the membrane as a helical span at residues 1–23 (MFAIISAGIAPGIALLSYFYLKD). The Cytoplasmic portion of the chain corresponds to 24-30 (QYDNEPV). The helical transmembrane segment at 31-53 (HMVLRSFFLGVVLVFPIMFIQYV) threads the bilayer. The Extracellular portion of the chain corresponds to 54-98 (LEKENVGGGSFFVSFLSSGFLEESLKWFILMISVYPHAHFDEHYD). Residues 99-121 (GIVYGASVSLGFATLENILYLIG) traverse the membrane as a helical segment. The Cytoplasmic portion of the chain corresponds to 122–129 (HGVEHAFV). A helical transmembrane segment spans residues 130–151 (RALLPVSCHALIGVIMGFYLGK). Residues 152 to 180 (ARFSADKARVKWLTLSLVVPSLLHGSYDF) lie on the Extracellular side of the membrane. The chain crosses the membrane as a helical span at residues 181-203 (ILTALSNWIYYMLPFMVFLWWFG). Topologically, residues 204-218 (LRKAKKARSVNMMQV) are cytoplasmic.

It belongs to the protease PrsW family.

It is found in the cell membrane. Functionally, involved in the degradation of anti-sigma-W factor RsiW. Responsible for Site-1 cleavage of the RsiW anti-sigma factor. This results, after two other proteolytic steps catalyzed by the RasP and ClpXP proteases, in the release of SigW and the transcription activation of the genes under the control of the sigma-W factor. Seems to be responsible for sensing antimicrobial peptides that damage the cell membrane and other agents that cause cell envelope stress. Therefore it is a protease governing regulated intramembrane proteolysis and resistance to antimicrobial peptides in B.subtilis. The chain is Protease PrsW from Bacillus subtilis (strain 168).